The chain runs to 56 residues: Large ribosomal subunit protein eL40 (56 aa).

This sequence belongs to the eukaryotic ribosomal protein eL40 family.

The chain is Large ribosomal subunit protein eL40 from Metallosphaera sedula (strain ATCC 51363 / DSM 5348 / JCM 9185 / NBRC 15509 / TH2).